A 417-amino-acid polypeptide reads, in one-letter code: Imidazolonepropionase (417 aa).

Fe(3+)-binding residues include His-77 and His-79. His-77 and His-79 together coordinate Zn(2+). 3 residues coordinate 4-imidazolone-5-propanoate: Arg-86, Tyr-149, and His-182. Tyr-149 lines the N-formimidoyl-L-glutamate pocket. His-244 provides a ligand contact to Fe(3+). Residue His-244 coordinates Zn(2+). Glu-247 is a binding site for 4-imidazolone-5-propanoate. Asp-323 contributes to the Fe(3+) binding site. Asp-323 lines the Zn(2+) pocket. An N-formimidoyl-L-glutamate-binding site is contributed by Asn-325.

The protein belongs to the metallo-dependent hydrolases superfamily. HutI family. Zn(2+) is required as a cofactor. Requires Fe(3+) as cofactor.

It is found in the cytoplasm. It catalyses the reaction 4-imidazolone-5-propanoate + H2O = N-formimidoyl-L-glutamate. The protein operates within amino-acid degradation; L-histidine degradation into L-glutamate; N-formimidoyl-L-glutamate from L-histidine: step 3/3. Catalyzes the hydrolytic cleavage of the carbon-nitrogen bond in imidazolone-5-propanoate to yield N-formimidoyl-L-glutamate. It is the third step in the universal histidine degradation pathway. This is Imidazolonepropionase from Halobacterium salinarum (strain ATCC 29341 / DSM 671 / R1).